The primary structure comprises 167 residues: Histidinol dehydrogenase (167 aa).

Residues glutamine 109 and histidine 112 each coordinate Zn(2+).

The protein belongs to the histidinol dehydrogenase family. As to quaternary structure, homodimer. Zn(2+) is required as a cofactor.

It carries out the reaction L-histidinol + 2 NAD(+) + H2O = L-histidine + 2 NADH + 3 H(+). It functions in the pathway amino-acid biosynthesis; L-histidine biosynthesis; L-histidine from 5-phospho-alpha-D-ribose 1-diphosphate: step 9/9. Functionally, catalyzes the sequential NAD-dependent oxidations of L-histidinol to L-histidinaldehyde and then to L-histidine. This Salmonella enteritidis protein is Histidinol dehydrogenase (hisD).